Consider the following 336-residue polypeptide: 4-hydroxy-3-methylbut-2-enyl diphosphate reductase (336 aa).

The segment at 1–23 (MFGQRLDTLGAMSSSVSSPSPET) is disordered. A [4Fe-4S] cluster-binding site is contributed by Cys-36. (2E)-4-hydroxy-3-methylbut-2-enyl diphosphate is bound by residues His-65 and His-98. Residues His-65 and His-98 each contribute to the dimethylallyl diphosphate site. Positions 65 and 98 each coordinate isopentenyl diphosphate. Cys-120 contacts [4Fe-4S] cluster. Residue His-148 coordinates (2E)-4-hydroxy-3-methylbut-2-enyl diphosphate. His-148 is a dimethylallyl diphosphate binding site. Residue His-148 coordinates isopentenyl diphosphate. Residue Glu-150 is the Proton donor of the active site. Thr-190 serves as a coordination point for (2E)-4-hydroxy-3-methylbut-2-enyl diphosphate. Cys-220 lines the [4Fe-4S] cluster pocket. (2E)-4-hydroxy-3-methylbut-2-enyl diphosphate is bound by residues Ser-248, Ser-249, Asn-250, and Ser-293. Ser-248, Ser-249, Asn-250, and Ser-293 together coordinate dimethylallyl diphosphate. Isopentenyl diphosphate is bound by residues Ser-248, Ser-249, Asn-250, and Ser-293.

This sequence belongs to the IspH family. [4Fe-4S] cluster is required as a cofactor.

The enzyme catalyses isopentenyl diphosphate + 2 oxidized [2Fe-2S]-[ferredoxin] + H2O = (2E)-4-hydroxy-3-methylbut-2-enyl diphosphate + 2 reduced [2Fe-2S]-[ferredoxin] + 2 H(+). The catalysed reaction is dimethylallyl diphosphate + 2 oxidized [2Fe-2S]-[ferredoxin] + H2O = (2E)-4-hydroxy-3-methylbut-2-enyl diphosphate + 2 reduced [2Fe-2S]-[ferredoxin] + 2 H(+). It functions in the pathway isoprenoid biosynthesis; dimethylallyl diphosphate biosynthesis; dimethylallyl diphosphate from (2E)-4-hydroxy-3-methylbutenyl diphosphate: step 1/1. Its pathway is isoprenoid biosynthesis; isopentenyl diphosphate biosynthesis via DXP pathway; isopentenyl diphosphate from 1-deoxy-D-xylulose 5-phosphate: step 6/6. In terms of biological role, catalyzes the conversion of 1-hydroxy-2-methyl-2-(E)-butenyl 4-diphosphate (HMBPP) into a mixture of isopentenyl diphosphate (IPP) and dimethylallyl diphosphate (DMAPP). Acts in the terminal step of the DOXP/MEP pathway for isoprenoid precursor biosynthesis. The protein is 4-hydroxy-3-methylbut-2-enyl diphosphate reductase of Corynebacterium efficiens (strain DSM 44549 / YS-314 / AJ 12310 / JCM 11189 / NBRC 100395).